A 422-amino-acid chain; its full sequence is L-threonine dehydratase biosynthetic IlvA (422 aa).

The residue at position 56 (Lys-56) is an N6-(pyridoxal phosphate)lysine. Pyridoxal 5'-phosphate-binding positions include Asn-83, Gly-189–Leu-193, and Ser-315. Residues His-339–Glu-413 form the ACT-like domain.

It belongs to the serine/threonine dehydratase family. Homotetramer. It depends on pyridoxal 5'-phosphate as a cofactor.

The enzyme catalyses L-threonine = 2-oxobutanoate + NH4(+). Its pathway is amino-acid biosynthesis; L-isoleucine biosynthesis; 2-oxobutanoate from L-threonine: step 1/1. In terms of biological role, catalyzes the anaerobic formation of alpha-ketobutyrate and ammonia from threonine in a two-step reaction. The first step involved a dehydration of threonine and a production of enamine intermediates (aminocrotonate), which tautomerizes to its imine form (iminobutyrate). Both intermediates are unstable and short-lived. The second step is the nonenzymatic hydrolysis of the enamine/imine intermediates to form 2-ketobutyrate and free ammonia. In the low water environment of the cell, the second step is accelerated by RidA. This Staphylococcus aureus (strain NCTC 8325 / PS 47) protein is L-threonine dehydratase biosynthetic IlvA (ilvA).